A 31-amino-acid chain; its full sequence is Nemertide alpha-5 (31 aa).

3 disulfides stabilise this stretch: Cys-2–Cys-16, Cys-9–Cys-20, and Cys-15–Cys-26. Residues Pro-28 and Pro-29 each carry the 4-hydroxyproline modification.

This sequence belongs to the nemertide family. As to expression, confined to the epidermis and to the mucus layer.

It is found in the secreted. Functionally, highly potent toxin against both insect and some mammalian sodium channels (Nav). It potently inhibits inactivation of insect sodium channels of B.germanica (BgNav1) (EC(50)=7.8 nM) and also delays the inactivation of mammalian Nav with potent activity on Nav1.3/SCN3A and Nav1.4/SCN4A (hNav1.1/SCN1A; EC(50)=102.1 nM, rNav1.2/SCN2A; EC(50)=156.1 nM, rNav1.3/SCN3A; EC(50)=9.4 nM, rNav1.4/SCN4A; EC(50)=15.4 nM, hNav1.5/SCN5A; EC(50)=132.7 nM, mNav1.6/SCN8A; EC(50)=66.9 nM, hNav1.9/SCN9A; EC(50)=73 nM). 1 uM is enough to completely inhibits the inactivation, resulting in sustained non-inactivating currents. In addition, the toxin significantly enhances the recovery from inactivation, and the open state is not required for the toxin to interact with the channel. In vivo, injection into brine shrimp (Artemia salina) stops movement or causes death after 24 hours (EC(50)=0.4 uM). The sequence is that of Nemertide alpha-5 from Ramphogordius pseudolacteus (Ribbon worm).